We begin with the raw amino-acid sequence, 357 residues long: Phosphate acyltransferase (357 aa).

The protein belongs to the PlsX family. In terms of assembly, homodimer. Probably interacts with PlsY.

The protein resides in the cytoplasm. The catalysed reaction is a fatty acyl-[ACP] + phosphate = an acyl phosphate + holo-[ACP]. It participates in lipid metabolism; phospholipid metabolism. Functionally, catalyzes the reversible formation of acyl-phosphate (acyl-PO(4)) from acyl-[acyl-carrier-protein] (acyl-ACP). This enzyme utilizes acyl-ACP as fatty acyl donor, but not acyl-CoA. This is Phosphate acyltransferase from Herminiimonas arsenicoxydans.